The chain runs to 395 residues: Phosphoglycerate kinase (395 aa).

Substrate is bound by residues 20–22, Arg-36, 59–62, Arg-120, and Arg-157; these read DFN and HLGR. Residues Lys-208, Gly-296, Glu-327, and 353–356 contribute to the ATP site; that span reads GGDT.

It belongs to the phosphoglycerate kinase family. Monomer.

Its subcellular location is the cytoplasm. The catalysed reaction is (2R)-3-phosphoglycerate + ATP = (2R)-3-phospho-glyceroyl phosphate + ADP. It participates in carbohydrate degradation; glycolysis; pyruvate from D-glyceraldehyde 3-phosphate: step 2/5. The sequence is that of Phosphoglycerate kinase from Tropheryma whipplei (strain Twist) (Whipple's bacillus).